The primary structure comprises 437 residues: Na(+)/H(+) antiporter NhaA (437 aa).

11 helical membrane passes run 12 to 32 (SMNI…AVIA), 65 to 85 (LTMI…MVGL), 103 to 123 (ALPF…YSMV), 133 to 153 (GLAI…SLLG), 162 to 182 (IFLT…IAIF), 186 to 206 (HVAY…YFIG), 214 to 234 (IFFL…GIHS), 308 to 328 (GAVN…VMFS), 333 to 353 (VIGG…FLGI), 377 to 397 (ISGV…IANL), and 412 to 432 (LGVL…LHWV).

The protein belongs to the NhaA Na(+)/H(+) (TC 2.A.33) antiporter family.

It is found in the cell inner membrane. It catalyses the reaction Na(+)(in) + 2 H(+)(out) = Na(+)(out) + 2 H(+)(in). Na(+)/H(+) antiporter that extrudes sodium in exchange for external protons. The chain is Na(+)/H(+) antiporter NhaA from Bacteroides fragilis (strain ATCC 25285 / DSM 2151 / CCUG 4856 / JCM 11019 / LMG 10263 / NCTC 9343 / Onslow / VPI 2553 / EN-2).